Consider the following 1938-residue polypeptide: Myosin-1 (1938 aa).

The Myosin N-terminal SH3-like domain maps to 33–82 (DAKTSVFVADPKESFVKATVQSREGGKVTAKTEAGATVTVKEDQVFPMNP). A phosphothreonine mark is found at threonine 64 and threonine 69. One can recognise a Myosin motor domain in the interval 86 to 781 (DKIEDMAMMT…LLGLLEEMRD (696 aa)). N6,N6,N6-trimethyllysine is present on lysine 130. Residue 179 to 186 (GESGAGKT) participates in ATP binding. Tyrosine 389 carries the post-translational modification Phosphotyrosine. The residue at position 419 (threonine 419) is a Phosphothreonine. A Phosphotyrosine modification is found at tyrosine 424. Serine 625 carries the post-translational modification Phosphoserine. The segment at 658 to 680 (LNKLMTNLRSTHPHFVRCIIPNE) is actin-binding. Histidine 756 carries the pros-methylhistidine modification. Positions 760-774 (KFGHTKVFFKAGLLG) are actin-binding. The 30-residue stretch at 784-813 (LAQLITRTQARCRGFLARVEYQKMVERRES) folds into the IQ domain. Positions 842-1938 (LLKSAETEKE…EVHTKIISEE (1097 aa)) form a coiled coil. Phosphoserine occurs at positions 1091 and 1095. 2 disordered regions span residues 1124–1146 (EIEAERASRAKAEKQRSDLSREL) and 1152–1171 (RLEEAGGATSAQIEMNKKRE). Residues 1127–1146 (AERASRAKAEKQRSDLSREL) show a composition bias toward basic and acidic residues. A phosphoserine mark is found at serine 1161 and serine 1236. The residue at position 1240 (threonine 1240) is a Phosphothreonine. Phosphoserine is present on residues serine 1242 and serine 1260. Phosphothreonine occurs at positions 1264 and 1285. Phosphoserine occurs at positions 1287, 1291, 1302, and 1305. Position 1463 is a phosphotyrosine (tyrosine 1463). Phosphothreonine is present on threonine 1466. At serine 1473 the chain carries Phosphoserine. Tyrosine 1491 is subject to Phosphotyrosine. Serine 1494 is modified (phosphoserine). A Phosphothreonine modification is found at threonine 1500. The residue at position 1513 (serine 1513) is a Phosphoserine. Phosphothreonine is present on threonine 1516. 7 positions are modified to phosphoserine: serine 1541, serine 1553, serine 1573, serine 1599, serine 1602, serine 1713, and serine 1725. Phosphothreonine occurs at positions 1729 and 1735.

This sequence belongs to the TRAFAC class myosin-kinesin ATPase superfamily. Myosin family. Muscle myosin is a hexameric protein that consists of 2 heavy chain subunits (MHC), 2 alkali light chain subunits (MLC) and 2 regulatory light chain subunits (MLC-2). Interacts with SLC26A5.

The protein resides in the cytoplasm. It is found in the myofibril. Required for normal hearing. It plays a role in cochlear amplification of auditory stimuli, likely through the positive regulation of prestin (SLC26A5) activity and outer hair cell (OHC) electromotility. This Bos taurus (Bovine) protein is Myosin-1 (MYH1).